Reading from the N-terminus, the 415-residue chain is ORC1-type DNA replication protein 2 (415 aa).

Residues 69–73 (TGKSV), Tyr215, and Arg227 contribute to the ATP site.

It belongs to the CDC6/cdc18 family.

Functionally, involved in regulation of DNA replication. This is ORC1-type DNA replication protein 2 (cdc6-2) from Sulfolobus acidocaldarius (strain ATCC 33909 / DSM 639 / JCM 8929 / NBRC 15157 / NCIMB 11770).